The following is a 271-amino-acid chain: Interleukin-1 alpha (271 aa).

Positions 1-112 (MAKVPDMFED…DSEEEIIKPR (112 aa)) are excised as a propeptide. Residue lysine 82 is modified to N6-acetyllysine. Residues lysine 82 and lysine 83 are each lipidated (N6-myristoyl lysine). The interval 82–86 (KKRRL) is nuclear localization signal (NLS). Phosphoserine is present on serine 87. N-linked (GlcNAc...) asparagine glycosylation is found at asparagine 102 and asparagine 141.

The protein belongs to the IL-1 family. As to quaternary structure, monomer. Interacts with TMED10; the interaction mediates the translocation from the cytoplasm into the ERGIC (endoplasmic reticulum-Golgi intermediate compartment) and thereby secretion. Interacts with IL1R1. Interacts with S100A13; this interaction is the first step in the export of IL1A, followed by direct translocation of this complex across the plasma membrane. In terms of processing, acetylated within its nuclear localization sequence, which impacts subcellular localization. Post-translationally, proteolytic processed by CAPN1 in a calcium-dependent manner. Cleavage from 31 kDa precursor to 18 kDa biologically active molecules. Phosphorylated. Phosphorylation greatly enhances susceptibility to digestion and promotes the conversion of pre-IL1A alpha to the biologically active IL1A.

The protein localises to the nucleus. The protein resides in the cytoplasm. It localises to the secreted. Functionally, cytokine constitutively present intracellularly in nearly all resting non-hematopoietic cells that plays an important role in inflammation and bridges the innate and adaptive immune systems. After binding to its receptor IL1R1 together with its accessory protein IL1RAP, forms the high affinity interleukin-1 receptor complex. Signaling involves the recruitment of adapter molecules such as MYD88, IRAK1 or IRAK4. In turn, mediates the activation of NF-kappa-B and the three MAPK pathways p38, p42/p44 and JNK pathways. Within the cell, acts as an alarmin and cell death results in its liberation in the extracellular space after disruption of the cell membrane to induce inflammation and alert the host to injury or damage. In addition to its role as a danger signal, which occurs when the cytokine is passively released by cell necrosis, directly senses DNA damage and acts as a signal for genotoxic stress without loss of cell integrity. The protein is Interleukin-1 alpha (IL1A) of Homo sapiens (Human).